Here is a 346-residue protein sequence, read N- to C-terminus: Oxidoreductase calI (346 aa).

The interval 11–33 (VSTPQGRGDGRPTADQVLRDQDP) is disordered. The segment covering 18–32 (GDGRPTADQVLRDQD) has biased composition (basic and acidic residues). NADP(+) is bound by residues L52, K76, D100, and N128. S181 acts as the Proton donor in catalysis. NADP(+) is bound by residues Y208, K212, and I241. Y208 functions as the Proton acceptor in the catalytic mechanism. The active-site Lowers pKa of active site Tyr is the K212.

It belongs to the short-chain dehydrogenases/reductases (SDR) family.

It functions in the pathway secondary metabolite biosynthesis. Functionally, oxidoreductase; part of the gene cluster that mediates the biosynthesis of calbistrin A and related compounds. Calbistrin A is a secondary metabolite with an interesting structure that was recently found to have bioactivity against leukemia cells. It consists of two polyketides linked by an ester bond: a bicyclic decalin containing polyketide and a linear 12 carbon dioic acid structure. The polyketide synthase calA is probably responsible for forming the decalin moiety. Because calA lacks a designated enoylreductase (ER) domain, the required activity is provided by the trans-enoyl reductase calK. Following release from the PKS, calF then probably catalyzes the oxidation and the subsequent Diels Alder cycloisomerization that lead to the formation of the decalin moiety. The decalin polyketide backbone includes two C-methyl groups, at C7 and C11 in backbone, of which the C7 position is probably methylated by the methyltransferase domain of calA. A candidate for adding the methyl group at C11, if not done by CalA, is the cluster methyltransferase calH. Several additional tailoring enzymes within the cluster could be involved in the modification of the decalin polyketide product. Those include the 3 cytochrome P450 monooxygenases CalE, CalG and CalL, of which one might be responsible for the introduction of the extra hydroxyl group attached to the backbone of the decalin moiety, at position C9 in the backbone, that allows for attachment of the linear moiety. One tailoring enzyme activity that is expected to be involved in biosynthesis of calbistrin is an acyltransferase for connecting the two polyketide synthase products, and which could be performed by the cluster acyltransferase calJ. The enzyme responsible for the biosynthesis of the linear moiety, probably a second PKS, has not been identified yet. The sequence is that of Oxidoreductase calI from Penicillium decumbens.